The chain runs to 905 residues: Protein translocase subunit SecA (905 aa).

ATP-binding positions include Gln89, 107–111 (GEGKT), and Asp502. Zn(2+) contacts are provided by Cys889, Cys891, Cys900, and His901.

This sequence belongs to the SecA family. In terms of assembly, monomer and homodimer. Part of the essential Sec protein translocation apparatus which comprises SecA, SecYEG and auxiliary proteins SecDF-YajC and YidC. Zn(2+) serves as cofactor.

The protein localises to the cell inner membrane. It localises to the cytoplasm. It carries out the reaction ATP + H2O + cellular proteinSide 1 = ADP + phosphate + cellular proteinSide 2.. Functionally, part of the Sec protein translocase complex. Interacts with the SecYEG preprotein conducting channel. Has a central role in coupling the hydrolysis of ATP to the transfer of proteins into and across the cell membrane, serving both as a receptor for the preprotein-SecB complex and as an ATP-driven molecular motor driving the stepwise translocation of polypeptide chains across the membrane. The sequence is that of Protein translocase subunit SecA from Bartonella tribocorum (strain CIP 105476 / IBS 506).